The sequence spans 588 residues: MSGDYEDDLCRRALILVSDLCARIRDADTNDRCQEFNELRIRGYPRGPDADISVSLLSVIVTFCGIVLLGVSLFVSWKLCWVPWRDKGGSAVGGGPLRKDLAPGVGLAGLVGGGGHHLGASLGGHPLLGGPHHHAHPAHHPPFAELLEPGGLGGSEPPEPSYLDMDSYPEAAVASVVAAGVKPSQTSPELPSEGGTGSGLLLLPPSGGGLPSAQSHQQVTSLAPTTRYPALPRPLTQQTLTTQADPSSEERPPALPLPLPGGEEKAKLIGQIKPELYQGTGPGGRRTGGGSGEAGAPCGRISFALRYLYGSDQLVVRILQALDLPAKDSNGFSDPYVKIYLLPDRKKKFQTKVHRKTLNPIFNETFQFSVPLAELAQRKLHFSVYDFDRFSRHDLIGQVVLDNLLELAEQPPDRPLWRDILEGGSEKADLGELNFSLCYLPTAGLLTVTIIKASNLKAMDLTGFSDPYVKASLISEGRRLKKRKTSIKKNTLNPTYNEALVFDVAPESVENVGLSIAVVDYDCIGHNEVIGVCRVGPEAADPHGREHWAEMLANPRKPVEHWHQLVEEKTLSSFTKGGKGLSEKENSE.

Residues 1–54 are Vesicular-facing; it reads MSGDYEDDLCRRALILVSDLCARIRDADTNDRCQEFNELRIRGYPRGPDADISV. The interval 10-34 is cysteine motif; it reads CRRALILVSDLCARIRDADTNDRCQ. A helical membrane pass occupies residues 55-75; that stretch reads SLLSVIVTFCGIVLLGVSLFV. The Cytoplasmic segment spans residues 76 to 588; the sequence is SWKLCWVPWR…KGLSEKENSE (513 aa). 3 disordered regions span residues 129 to 161, 183 to 222, and 238 to 257; these read GGPH…PEPS, PSQT…VTSL, and QTLT…ALPL. Positions 183-205 are enriched in low complexity; it reads PSQTSPELPSEGGTGSGLLLLPP. The segment covering 213–222 has biased composition (polar residues); sequence AQSHQQVTSL. At R286 the chain carries Omega-N-methylarginine. C2 domains are found at residues 297-418 and 429-563; these read PCGR…PLWR and DLGE…EHWH. Ca(2+) contacts are provided by D328, D334, D386, F387, D388, S391, D394, D460, D466, D520, and D522.

This sequence belongs to the synaptotagmin family. In terms of assembly, homodimer; disulfide-linked via the cysteine motif. Can also form heterodimers with SYT6, SYT9 and SYT10. The cofactor is Ca(2+). Brain, various endocrine tissues and hormone-secreting clonal cells.

It is found in the cell membrane. Its subcellular location is the cytoplasmic vesicle. The protein localises to the secretory vesicle membrane. In terms of biological role, ca(2+) sensor involved in Ca(2+)-dependent exocytosis of secretory vesicles through Ca(2+) and phospholipid binding to the C2 domain. Ca(2+) induces binding of the C2-domains to phospholipid membranes and to assembled SNARE-complexes; both actions contribute to triggering exocytosis. Plays a role in dendrite formation by melanocytes. The protein is Synaptotagmin-3 (Syt3) of Rattus norvegicus (Rat).